Here is a 689-residue protein sequence, read N- to C-terminus: Glycine--tRNA ligase beta subunit (689 aa).

The protein belongs to the class-II aminoacyl-tRNA synthetase family. Tetramer of two alpha and two beta subunits.

It localises to the cytoplasm. The enzyme catalyses tRNA(Gly) + glycine + ATP = glycyl-tRNA(Gly) + AMP + diphosphate. The chain is Glycine--tRNA ligase beta subunit from Shigella dysenteriae serotype 1 (strain Sd197).